Reading from the N-terminus, the 179-residue chain is Large ribosomal subunit protein uL5 (179 aa).

It belongs to the universal ribosomal protein uL5 family. In terms of assembly, part of the 50S ribosomal subunit; part of the 5S rRNA/L5/L18/L25 subcomplex. Contacts the 5S rRNA and the P site tRNA. Forms a bridge to the 30S subunit in the 70S ribosome.

Its function is as follows. This is one of the proteins that bind and probably mediate the attachment of the 5S RNA into the large ribosomal subunit, where it forms part of the central protuberance. In the 70S ribosome it contacts protein S13 of the 30S subunit (bridge B1b), connecting the 2 subunits; this bridge is implicated in subunit movement. Contacts the P site tRNA; the 5S rRNA and some of its associated proteins might help stabilize positioning of ribosome-bound tRNAs. The protein is Large ribosomal subunit protein uL5 of Nitrosospira multiformis (strain ATCC 25196 / NCIMB 11849 / C 71).